The chain runs to 122 residues: Large ribosomal subunit protein uL14 (122 aa).

It belongs to the universal ribosomal protein uL14 family. In terms of assembly, part of the 50S ribosomal subunit. Forms a cluster with proteins L3 and L19. In the 70S ribosome, L14 and L19 interact and together make contacts with the 16S rRNA in bridges B5 and B8.

Functionally, binds to 23S rRNA. Forms part of two intersubunit bridges in the 70S ribosome. This Burkholderia vietnamiensis (strain G4 / LMG 22486) (Burkholderia cepacia (strain R1808)) protein is Large ribosomal subunit protein uL14.